Here is a 371-residue protein sequence, read N- to C-terminus: Cytochrome b (371 aa).

The next 4 membrane-spanning stretches (helical) occupy residues 25–45 (FGSMLLTCLMLQVLTGFFLAI), 69–90 (WIMQNTHAIGASLFFICIYIHI), 105–125 (WLSGVTLLMTLMATAFFGYVL), and 170–190 (FCALHFILPFIIISLSSIHII). Residues H75 and H89 each coordinate heme b. Residues H174 and H188 each coordinate heme b. H193 lines the a ubiquinone pocket. The next 4 helical transmembrane spans lie at 218–238 (YKDFMTTTSMIILLPISLSVS), 280–300 (LGGTLALLMSILILTLPPFTH), 312–332 (LSQTLFWTLIATFVMITWTAT), and 339–358 (FITISQLTSIFYFSFFIMNP).

It belongs to the cytochrome b family. In terms of assembly, the cytochrome bc1 complex contains 3 respiratory subunits (MT-CYB, CYC1 and UQCRFS1), 2 core proteins (UQCRC1 and UQCRC2) and probably 6 low-molecular weight proteins. The cofactor is heme b.

It is found in the mitochondrion inner membrane. Component of the ubiquinol-cytochrome c reductase complex (complex III or cytochrome b-c1 complex) that is part of the mitochondrial respiratory chain. The b-c1 complex mediates electron transfer from ubiquinol to cytochrome c. Contributes to the generation of a proton gradient across the mitochondrial membrane that is then used for ATP synthesis. This Micrurus tener microgalbineus (Spotted coral snake) protein is Cytochrome b (MT-CYB).